The following is a 51-amino-acid chain: Large ribosomal subunit protein bL33 (51 aa).

The protein belongs to the bacterial ribosomal protein bL33 family.

The protein is Large ribosomal subunit protein bL33 of Marinobacter nauticus (strain ATCC 700491 / DSM 11845 / VT8) (Marinobacter aquaeolei).